A 254-amino-acid chain; its full sequence is L-arabinose 1-dehydrogenase (NAD(P)(+)) (254 aa).

The active-site Proton acceptor is the Tyr142. Tyr142 and Lys146 together coordinate NAD(+).

Belongs to the NAD(P)-dependent epimerase/dehydratase family. As to quaternary structure, homotetramer.

It carries out the reaction alpha-L-arabinopyanose + NAD(+) = L-arabinono-1,4-lactone + NADH + H(+). The catalysed reaction is alpha-L-arabinopyanose + NADP(+) = L-arabinono-1,4-lactone + NADPH + H(+). It functions in the pathway carbohydrate degradation; L-arabinose degradation via L-arabinono-1,4-lactone pathway. Functionally, L-AraDH initiates the degradation of L-arabinose. Catalyzes the NAD(P)(+)-dependent conversion of L-arabinose to L-arabino-gamma-lactone. It is highly specific for L-arabinose as substrate and can use both NADP(+) and NAD(+) as electron acceptor, with a slight preference for NADP(+). The chain is L-arabinose 1-dehydrogenase (NAD(P)(+)) from Haloferax volcanii (strain ATCC 29605 / DSM 3757 / JCM 8879 / NBRC 14742 / NCIMB 2012 / VKM B-1768 / DS2) (Halobacterium volcanii).